A 102-amino-acid polypeptide reads, in one-letter code: Ribosomal silencing factor RsfS (102 aa).

It belongs to the Iojap/RsfS family. As to quaternary structure, interacts with ribosomal protein uL14 (rplN).

Its subcellular location is the cytoplasm. Its function is as follows. Functions as a ribosomal silencing factor. Interacts with ribosomal protein uL14 (rplN), blocking formation of intersubunit bridge B8. Prevents association of the 30S and 50S ribosomal subunits and the formation of functional ribosomes, thus repressing translation. The polypeptide is Ribosomal silencing factor RsfS (Haemophilus influenzae (strain ATCC 51907 / DSM 11121 / KW20 / Rd)).